The following is a 297-amino-acid chain: tRNA pseudouridine synthase B (297 aa).

The Nucleophile role is filled by aspartate 44.

Belongs to the pseudouridine synthase TruB family. Type 1 subfamily.

It catalyses the reaction uridine(55) in tRNA = pseudouridine(55) in tRNA. Functionally, responsible for synthesis of pseudouridine from uracil-55 in the psi GC loop of transfer RNAs. The polypeptide is tRNA pseudouridine synthase B (Mycobacterium sp. (strain JLS)).